The sequence spans 150 residues: Large ribosomal subunit protein eL19 (150 aa).

Residues 55-89 form a disordered region; it reads IKGQSRYRAKIRHEQKKKGRHRGPGSRKGKKTARM.

It belongs to the eukaryotic ribosomal protein eL19 family. As to quaternary structure, part of the 50S ribosomal subunit.

Its function is as follows. Binds to the 23S rRNA. This chain is Large ribosomal subunit protein eL19, found in Pyrococcus furiosus (strain ATCC 43587 / DSM 3638 / JCM 8422 / Vc1).